Reading from the N-terminus, the 488-residue chain is Ribulose bisphosphate carboxylase large chain 2 (488 aa).

Residues N128 and T178 each coordinate substrate. K180 acts as the Proton acceptor in catalysis. K182 provides a ligand contact to substrate. Positions 206, 208, and 209 each coordinate Mg(2+). K206 bears the N6-carboxylysine mark. H298 acts as the Proton acceptor in catalysis. Positions 299, 331, and 383 each coordinate substrate.

This sequence belongs to the RuBisCO large chain family. Type I subfamily. In terms of assembly, heterohexadecamer of 8 large chains and 8 small chains. The cofactor is Mg(2+).

The catalysed reaction is 2 (2R)-3-phosphoglycerate + 2 H(+) = D-ribulose 1,5-bisphosphate + CO2 + H2O. It carries out the reaction D-ribulose 1,5-bisphosphate + O2 = 2-phosphoglycolate + (2R)-3-phosphoglycerate + 2 H(+). In terms of biological role, ruBisCO catalyzes two reactions: the carboxylation of D-ribulose 1,5-bisphosphate, the primary event in carbon dioxide fixation, as well as the oxidative fragmentation of the pentose substrate. Both reactions occur simultaneously and in competition at the same active site. The sequence is that of Ribulose bisphosphate carboxylase large chain 2 from Nitrobacter hamburgensis (strain DSM 10229 / NCIMB 13809 / X14).